The chain runs to 370 residues: Probable endopolygalacturonase A (370 aa).

A signal peptide spans Met1–Ala19. A propeptide spanning residues Ala20–Arg32 is cleaved from the precursor. Cys35 and Cys50 are joined by a disulfide. PbH1 repeat units follow at residues Ser162–Glu192, Ser193–Ser214, Gly215–Ser235, Val244–Thr265, Val273–Gln295, and Ser307–Gly352. The active-site Proton donor is Asp207. Cys209 and Cys225 are oxidised to a cystine. The active site involves His229. N-linked (GlcNAc...) asparagine glycosylation occurs at Asn246. 2 cysteine pairs are disulfide-bonded: Cys335–Cys340 and Cys359–Cys368.

Belongs to the glycosyl hydrolase 28 family.

It is found in the secreted. The catalysed reaction is (1,4-alpha-D-galacturonosyl)n+m + H2O = (1,4-alpha-D-galacturonosyl)n + (1,4-alpha-D-galacturonosyl)m.. Involved in maceration and soft-rotting of plant tissue. Hydrolyzes the 1,4-alpha glycosidic bonds of de-esterified pectate in the smooth region of the plant cell wall. This is Probable endopolygalacturonase A (pgaA) from Aspergillus kawachii (strain NBRC 4308) (White koji mold).